Consider the following 338-residue polypeptide: Anthocyanidin reductase ((2S)-flavan-3-ol-forming) (338 aa).

Residues 18–21, Lys48, 87–90, and Tyr168 contribute to the NADP(+) site; these read TGFV and VATP.

The protein belongs to the NAD(P)-dependent epimerase/dehydratase family. Dihydroflavonol-4-reductase subfamily. As to expression, expressed in seeds, grape skins, flowers and leaves.

It carries out the reaction a (2S,3R)-flavan-3-ol + 2 NADP(+) = an anthocyanidin with a 3-hydroxy group + 2 NADPH + 2 H(+). It catalyses the reaction a (2S,3S)-flavan-3-ol + 2 NADP(+) = an anthocyanidin with a 3-hydroxy group + 2 NADPH + 2 H(+). Its pathway is secondary metabolite biosynthesis; flavonoid biosynthesis. Inhibited at NaCl concentrations higher than 200 mM. Functionally, produces the terminal flavan-3-ol monomers required for the formation of proanthocyanidins or condensed tannins in leaves and flowers, as well as in the skin and seeds of developing berries. Behaves as a reductase and as a C-3 epimerase. Catalyzes the double reduction of anthocyanidins, producing a mixture of (2S,3S)- and (2S,3R)-flavan-3-ols. The enzyme catalyzes sequential hydride transfers to C-2 and C-4, respectively and epimerization at C-3 is achieved by tautomerization that occurs between the two hydride transfers. Converts cyanidin, pelargonidin and delphinidin into catechin and epicatechin, afzelechin and epiafzelechin, and gallocatechin and epigallocatechin respectively. In Vitis vinifera (Grape), this protein is Anthocyanidin reductase ((2S)-flavan-3-ol-forming).